Reading from the N-terminus, the 441-residue chain is Protein eva-1 homolog C (441 aa).

A disordered region spans residues 1 to 23; that stretch reads MLLPGPARQPPTPQPVQHPGLRR. The N-terminal stretch at 1 to 48 is a signal peptide; the sequence is MLLPGPARQPPTPQPVQHPGLRRQVEPPGQLLRLFYCTVLVCSKEISA. A compositionally biased stretch (pro residues) spans 7–16; the sequence is ARQPPTPQPV. The Extracellular segment spans residues 49–322; the sequence is LTDFSGYLTK…AYIRAHPERA (274 aa). Asn-62 carries N-linked (GlcNAc...) asparagine glycosylation. The SUEL-type lectin 1 domain maps to 67–159; that stretch reads ACDGDYLNLQ…KYLLVSFKCQ (93 aa). N-linked (GlcNAc...) asparagine glycosylation is present at Asn-165. The 93-residue stretch at 168–260 folds into the SUEL-type lectin 2 domain; it reads VCEDQELKLH…KYLTVTYACV (93 aa). A helical membrane pass occupies residues 323–343; it reads ALLFVSSVCIGLALTLCALVI. The Cytoplasmic portion of the chain corresponds to 344–441; it reads RESCAKDFRD…SLPRNMGQFY (98 aa). The disordered stretch occupies residues 362 to 391; the sequence is VPGSDKVEEDSEDEEEEEDSSESDFPGELS. Over residues 368–383 the composition is skewed to acidic residues; the sequence is VEEDSEDEEEEEDSSE.

The protein belongs to the EVA1 family.

It localises to the cell membrane. In terms of biological role, binds heparin. The protein is Protein eva-1 homolog C (EVA1C) of Pan troglodytes (Chimpanzee).